Consider the following 227-residue polypeptide: Ribosomal RNA large subunit methyltransferase E (227 aa).

S-adenosyl-L-methionine-binding residues include Gly78, Trp80, Asp103, Asp119, and Asp143. The active-site Proton acceptor is the Lys183.

Belongs to the class I-like SAM-binding methyltransferase superfamily. RNA methyltransferase RlmE family.

Its subcellular location is the cytoplasm. The catalysed reaction is uridine(2552) in 23S rRNA + S-adenosyl-L-methionine = 2'-O-methyluridine(2552) in 23S rRNA + S-adenosyl-L-homocysteine + H(+). Specifically methylates the uridine in position 2552 of 23S rRNA at the 2'-O position of the ribose in the fully assembled 50S ribosomal subunit. This chain is Ribosomal RNA large subunit methyltransferase E, found in Rickettsia bellii (strain RML369-C).